A 193-amino-acid polypeptide reads, in one-letter code: Holliday junction branch migration complex subunit RuvA (193 aa).

The domain I stretch occupies residues 1–63 (MYAYLKGKIM…EDAQLLYGFK (63 aa)). Residues 64 to 141 (DEEEKAMFNA…TITDESELFK (78 aa)) form a domain II region. Residues 141-142 (KE) form a flexible linker region. The tract at residues 143 to 193 (VNDTLLNEALLAFEALGYSKREITKIEKELKKKQFSTVDEYVKQGLQMFVS) is domain III.

This sequence belongs to the RuvA family. In terms of assembly, homotetramer. Forms an RuvA(8)-RuvB(12)-Holliday junction (HJ) complex. HJ DNA is sandwiched between 2 RuvA tetramers; dsDNA enters through RuvA and exits via RuvB. An RuvB hexamer assembles on each DNA strand where it exits the tetramer. Each RuvB hexamer is contacted by two RuvA subunits (via domain III) on 2 adjacent RuvB subunits; this complex drives branch migration. In the full resolvosome a probable DNA-RuvA(4)-RuvB(12)-RuvC(2) complex forms which resolves the HJ.

The protein localises to the cytoplasm. The RuvA-RuvB-RuvC complex processes Holliday junction (HJ) DNA during genetic recombination and DNA repair, while the RuvA-RuvB complex plays an important role in the rescue of blocked DNA replication forks via replication fork reversal (RFR). RuvA specifically binds to HJ cruciform DNA, conferring on it an open structure. The RuvB hexamer acts as an ATP-dependent pump, pulling dsDNA into and through the RuvAB complex. HJ branch migration allows RuvC to scan DNA until it finds its consensus sequence, where it cleaves and resolves the cruciform DNA. The protein is Holliday junction branch migration complex subunit RuvA of Macrococcus caseolyticus (strain JCSC5402) (Macrococcoides caseolyticum).